The sequence spans 253 residues: Sulfate transporter CysZ (253 aa).

4 consecutive transmembrane segments (helical) span residues 31–51, 72–92, 151–171, and 222–242; these read FVIL…WWLF, LSYL…GYFF, IVLL…PVLW, and IPVL…AMWV.

It belongs to the CysZ family.

Its subcellular location is the cell inner membrane. Its function is as follows. High affinity, high specificity proton-dependent sulfate transporter, which mediates sulfate uptake. Provides the sulfur source for the cysteine synthesis pathway. This is Sulfate transporter CysZ from Salmonella paratyphi A (strain AKU_12601).